The primary structure comprises 888 residues: Isoleucine--tRNA ligase (888 aa).

Residues 61 to 71 carry the 'HIGH' region motif; that stretch reads PYANGSIHIGH. Residue Glu-551 coordinates L-isoleucyl-5'-AMP. Positions 592–596 match the 'KMSKS' region motif; sequence KMSKQ. Lys-595 lines the ATP pocket. The Zn(2+) site is built by Cys-862, Cys-865, Cys-879, and Cys-882.

This sequence belongs to the class-I aminoacyl-tRNA synthetase family. IleS type 1 subfamily. Monomer. Zn(2+) serves as cofactor.

The protein resides in the cytoplasm. It catalyses the reaction tRNA(Ile) + L-isoleucine + ATP = L-isoleucyl-tRNA(Ile) + AMP + diphosphate. Its function is as follows. Catalyzes the attachment of isoleucine to tRNA(Ile). As IleRS can inadvertently accommodate and process structurally similar amino acids such as valine, to avoid such errors it has two additional distinct tRNA(Ile)-dependent editing activities. One activity is designated as 'pretransfer' editing and involves the hydrolysis of activated Val-AMP. The other activity is designated 'posttransfer' editing and involves deacylation of mischarged Val-tRNA(Ile). The chain is Isoleucine--tRNA ligase from Mycoplasmopsis pulmonis (strain UAB CTIP) (Mycoplasma pulmonis).